Reading from the N-terminus, the 1135-residue chain is Putative beta-hexosaminidase (1135 aa).

A signal peptide spans 1-23 (MKWVKSGVGILGILLTICHAVTS). Disordered stretches follow at residues 970–1082 (AHPP…LPGQ) and 1107–1135 (QMRG…QQAG). A compositionally biased stretch (pro residues) spans 986–1003 (NMPPPFPPRPPFGPPMLP). Low complexity-rich tracts occupy residues 1004-1026 (PGQM…TALG) and 1043-1073 (TGQA…LPGQ).

The protein belongs to the glycosyl hydrolase 20 family. In terms of tissue distribution, prismatic layer of shell (at protein level). Expressed primarily in the mantle with highest level in the mantle edge and lower level in the mantle pallium.

It localises to the secreted. The enzyme catalyses Hydrolysis of terminal non-reducing N-acetyl-D-hexosamine residues in N-acetyl-beta-D-hexosaminides.. The protein operates within glycan degradation; chitin degradation. This is Putative beta-hexosaminidase from Margaritifera margaritifera (Freshwater pearl mussel).